A 406-amino-acid chain; its full sequence is Cysteine desulfurase IscS (406 aa).

Pyridoxal 5'-phosphate-binding positions include 75-76, Asn155, Gln183, and 203-205; these read AT and SSH. At Lys206 the chain carries N6-(pyridoxal phosphate)lysine. A pyridoxal 5'-phosphate-binding site is contributed by Thr243. The active-site Cysteine persulfide intermediate is Cys330. [2Fe-2S] cluster is bound at residue Cys330.

This sequence belongs to the class-V pyridoxal-phosphate-dependent aminotransferase family. NifS/IscS subfamily. In terms of assembly, homodimer. Forms a heterotetramer with IscU, interacts with other sulfur acceptors. It depends on pyridoxal 5'-phosphate as a cofactor.

The protein resides in the cytoplasm. It catalyses the reaction (sulfur carrier)-H + L-cysteine = (sulfur carrier)-SH + L-alanine. It functions in the pathway cofactor biosynthesis; iron-sulfur cluster biosynthesis. Functionally, master enzyme that delivers sulfur to a number of partners involved in Fe-S cluster assembly, tRNA modification or cofactor biosynthesis. Catalyzes the removal of elemental sulfur atoms from cysteine to produce alanine. Functions as a sulfur delivery protein for Fe-S cluster synthesis onto IscU, an Fe-S scaffold assembly protein, as well as other S acceptor proteins. This Glaesserella parasuis serovar 5 (strain SH0165) (Haemophilus parasuis) protein is Cysteine desulfurase IscS.